A 1319-amino-acid chain; its full sequence is Girdin homolog (1319 aa).

A Calponin-homology (CH) domain is found at 6 to 118 (ENWSHPLAFW…KLLLLLLGCA (113 aa)). Coiled-coil stretches lie at residues 141 to 173 (ELAA…TDEV), 218 to 690 (TSEL…ADLI), and 732 to 1096 (KRER…KKST). Residues 166 to 222 (KMKETDEVGGGGGSIEDVDSDDMESSTTSSSNGEIAIKQQDQSFLMSRSTSPTSELR) form a disordered region. A compositionally biased stretch (polar residues) spans 204 to 222 (QQDQSFLMSRSTSPTSELR). Disordered stretches follow at residues 1112–1236 (INRR…SPAH) and 1289–1308 (NVNL…LKPN). Residues 1118–1131 (TSNGGSTTEDSSVY) show a composition bias toward polar residues.

This sequence belongs to the CCDC88 family. Expressed in AQR and PQR gas-sensing neurons in hermaphrodites (at protein level).

Its subcellular location is the cytoplasm. The protein resides in the cytoskeleton. The protein localises to the cilium basal body. It localises to the microtubule organizing center. It is found in the centrosome. Its subcellular location is the centriole. Its function is as follows. Scaffolding protein that plays a role in ciliogenesis, cilium positioning and dendrite anchoring in sensory amphid neurons including AWB, AWA, AWC, ADL and ASI, the phasmid neurons PHA and PHB and the gas sensing neurons AQR, PQR, URX and BAG. Its role in cilium positioning may be through regulation of the localization of cell adhesion proteins such as the apical junction protein ajm-1, and the ciliary scaffolding protein Rootletin/che-10. Plays a more prominent role in regulating dendrite morphogenesis in AQR than in PQR neurons. Regulates localization of hmr-1 to the distal AQR dendrite. During embryonic elongation, required for the anchoring of URX and BAG dendrites to the presumptive nose. This is Girdin homolog from Caenorhabditis elegans.